Here is a 302-residue protein sequence, read N- to C-terminus: Acetylglutamate kinase (302 aa).

Residues 75-76 (GG), R97, and N198 contribute to the substrate site.

The protein belongs to the acetylglutamate kinase family. ArgB subfamily.

The protein localises to the cytoplasm. It carries out the reaction N-acetyl-L-glutamate + ATP = N-acetyl-L-glutamyl 5-phosphate + ADP. It functions in the pathway amino-acid biosynthesis; L-arginine biosynthesis; N(2)-acetyl-L-ornithine from L-glutamate: step 2/4. Its function is as follows. Catalyzes the ATP-dependent phosphorylation of N-acetyl-L-glutamate. The polypeptide is Acetylglutamate kinase (Leifsonia xyli subsp. xyli (strain CTCB07)).